Reading from the N-terminus, the 233-residue chain is Probable GTP-binding protein EngB (233 aa).

Residues 31–205 (TGVEIAFAGR…RRKLDTWFGP (175 aa)) enclose the EngB-type G domain. Residues 39-46 (GRSNAGKS), 66-70 (GRTQL), 84-87 (DLPG), 151-154 (TKAD), and 184-186 (FSS) each bind GTP. Positions 46 and 68 each coordinate Mg(2+).

It belongs to the TRAFAC class TrmE-Era-EngA-EngB-Septin-like GTPase superfamily. EngB GTPase family. Requires Mg(2+) as cofactor.

Necessary for normal cell division and for the maintenance of normal septation. The protein is Probable GTP-binding protein EngB of Photobacterium profundum (strain SS9).